Here is a 943-residue protein sequence, read N- to C-terminus: Isoleucine--tRNA ligase (943 aa).

Residues proline 59–histidine 69 carry the 'HIGH' region motif. Glutamate 577 is a binding site for L-isoleucyl-5'-AMP. Positions lysine 618–serine 622 match the 'KMSKS' region motif. Residue lysine 621 coordinates ATP. The Zn(2+) site is built by cysteine 906, cysteine 909, cysteine 926, and cysteine 929.

It belongs to the class-I aminoacyl-tRNA synthetase family. IleS type 1 subfamily. Monomer. The cofactor is Zn(2+).

The protein resides in the cytoplasm. The enzyme catalyses tRNA(Ile) + L-isoleucine + ATP = L-isoleucyl-tRNA(Ile) + AMP + diphosphate. In terms of biological role, catalyzes the attachment of isoleucine to tRNA(Ile). As IleRS can inadvertently accommodate and process structurally similar amino acids such as valine, to avoid such errors it has two additional distinct tRNA(Ile)-dependent editing activities. One activity is designated as 'pretransfer' editing and involves the hydrolysis of activated Val-AMP. The other activity is designated 'posttransfer' editing and involves deacylation of mischarged Val-tRNA(Ile). In Xanthomonas campestris pv. campestris (strain 8004), this protein is Isoleucine--tRNA ligase.